The following is a 222-amino-acid chain: UPF0758 protein YicR (222 aa).

In terms of domain architecture, MPN spans 100–222 (PLLSPEMTRE…NVSFAERGWI (123 aa)). The Zn(2+) site is built by His-171, His-173, and Asp-184. Positions 171-184 (HNHPSGCAEPSKAD) match the JAMM motif motif.

This sequence belongs to the UPF0758 family. YicR subfamily.

The protein is UPF0758 protein YicR of Shigella boydii serotype 18 (strain CDC 3083-94 / BS512).